The primary structure comprises 394 residues: Elongation factor Tu (394 aa).

The tr-type G domain occupies 10–204 (KPHVNVGTIG…ALDSYIPTPE (195 aa)). The tract at residues 19–26 (GHVDHGKT) is G1. 19–26 (GHVDHGKT) provides a ligand contact to GTP. T26 contributes to the Mg(2+) binding site. The segment at 60–64 (GITIN) is G2. Residues 81-84 (DCPG) are G3. GTP is bound by residues 81–85 (DCPGH) and 136–139 (NKCD). The G4 stretch occupies residues 136–139 (NKCD). Residues 174 to 176 (SAL) are G5.

Belongs to the TRAFAC class translation factor GTPase superfamily. Classic translation factor GTPase family. EF-Tu/EF-1A subfamily. Monomer.

It is found in the cytoplasm. It catalyses the reaction GTP + H2O = GDP + phosphate + H(+). Functionally, GTP hydrolase that promotes the GTP-dependent binding of aminoacyl-tRNA to the A-site of ribosomes during protein biosynthesis. This is Elongation factor Tu from Neisseria gonorrhoeae (strain ATCC 700825 / FA 1090).